Here is a 241-residue protein sequence, read N- to C-terminus: Ribulose-phosphate 3-epimerase 1 (241 aa).

Ser21 contributes to the substrate binding site. Positions 46, 48, and 79 each coordinate a divalent metal cation. The active-site Proton acceptor is Asp48. Residues His79, 155-158 (GFGG), 192-194 (DGG), and 214-215 (GS) contribute to the substrate site. Position 192 (Asp192) interacts with a divalent metal cation. The active-site Proton donor is the Asp192.

Belongs to the ribulose-phosphate 3-epimerase family. It depends on a divalent metal cation as a cofactor.

It carries out the reaction D-ribulose 5-phosphate = D-xylulose 5-phosphate. It functions in the pathway carbohydrate degradation. Catalyzes the reversible epimerization of D-ribulose 5-phosphate to D-xylulose 5-phosphate. This chain is Ribulose-phosphate 3-epimerase 1, found in Cupriavidus necator (strain ATCC 17699 / DSM 428 / KCTC 22496 / NCIMB 10442 / H16 / Stanier 337) (Ralstonia eutropha).